Consider the following 412-residue polypeptide: Multidrug resistance protein MdtA (412 aa).

The N-terminal stretch at 1 to 21 (MKGSNIRRWGAALAVVIIAGA) is a signal peptide. 2 disordered regions span residues 33-53 (GSGA…RHGR) and 389-412 (VVTA…GARS).

It belongs to the membrane fusion protein (MFP) (TC 8.A.1) family. Part of a tripartite efflux system composed of MdtA, MdtB and MdtC.

It is found in the cell inner membrane. This is Multidrug resistance protein MdtA from Klebsiella pneumoniae subsp. pneumoniae (strain ATCC 700721 / MGH 78578).